The sequence spans 302 residues: tRNA pseudouridine synthase B (302 aa).

The active-site Nucleophile is the aspartate 47.

The protein belongs to the pseudouridine synthase TruB family. Type 1 subfamily.

It catalyses the reaction uridine(55) in tRNA = pseudouridine(55) in tRNA. Functionally, responsible for synthesis of pseudouridine from uracil-55 in the psi GC loop of transfer RNAs. The chain is tRNA pseudouridine synthase B from Ruegeria sp. (strain TM1040) (Silicibacter sp.).